The sequence spans 309 residues: NAD kinase (309 aa).

The active-site Proton acceptor is Asp89. NAD(+)-binding positions include 89-90, 163-164, His174, Arg191, Asp193, and 204-209; these read DG, NE, and TAYSLS.

It belongs to the NAD kinase family. Requires a divalent metal cation as cofactor.

Its subcellular location is the cytoplasm. It carries out the reaction NAD(+) + ATP = ADP + NADP(+) + H(+). In terms of biological role, involved in the regulation of the intracellular balance of NAD and NADP, and is a key enzyme in the biosynthesis of NADP. Catalyzes specifically the phosphorylation on 2'-hydroxyl of the adenosine moiety of NAD to yield NADP. The sequence is that of NAD kinase from Shewanella denitrificans (strain OS217 / ATCC BAA-1090 / DSM 15013).